The primary structure comprises 320 residues: Homoserine kinase (320 aa).

Residue 100–110 (PLSSGMGSSAA) participates in ATP binding.

It belongs to the GHMP kinase family. Homoserine kinase subfamily.

It localises to the cytoplasm. It catalyses the reaction L-homoserine + ATP = O-phospho-L-homoserine + ADP + H(+). It participates in amino-acid biosynthesis; L-threonine biosynthesis; L-threonine from L-aspartate: step 4/5. Its function is as follows. Catalyzes the ATP-dependent phosphorylation of L-homoserine to L-homoserine phosphate. The polypeptide is Homoserine kinase (Chlorobium phaeovibrioides (strain DSM 265 / 1930) (Prosthecochloris vibrioformis (strain DSM 265))).